The chain runs to 154 residues: MWSLKSTLCIALLVTYSVAQDSTTVDTTAATTATGGTTATGGTTATGGTTVSGATTAASGATTASTCADDPNTDCTQYTSLCSNAKYTPLLQQFCPKTCGFCGGGSTAAPVQCVDSSTNCANWEKNGFCSSTFYDCANKKQYCAKTCKLCTTTC.

A signal peptide spans 1–19 (MWSLKSTLCIALLVTYSVA). 2 ShKT domains span residues 67–102 (CADDPNTDCTQYTSLCSNAKYTPLLQQFCPKTCGFC) and 113–150 (CVDSSTNCANWEKNGFCSSTFYDCANKKQYCAKTCKLC). Intrachain disulfides connect Cys67–Cys102, Cys75–Cys95, Cys82–Cys99, Cys113–Cys150, Cys120–Cys143, and Cys129–Cys147.

This is an uncharacterized protein from Caenorhabditis elegans.